Consider the following 244-residue polypeptide: 5-oxoprolinase subunit A (244 aa).

The protein belongs to the LamB/PxpA family. As to quaternary structure, forms a complex composed of PxpA, PxpB and PxpC.

It catalyses the reaction 5-oxo-L-proline + ATP + 2 H2O = L-glutamate + ADP + phosphate + H(+). Catalyzes the cleavage of 5-oxoproline to form L-glutamate coupled to the hydrolysis of ATP to ADP and inorganic phosphate. The protein is 5-oxoprolinase subunit A of Citrobacter koseri (strain ATCC BAA-895 / CDC 4225-83 / SGSC4696).